The primary structure comprises 639 residues: Mediator of RNA polymerase II transcription subunit 17 (639 aa).

Residues 160–187 (RLQSFNAAADKLLKSASRLENEVASETR) adopt a coiled-coil conformation.

The protein belongs to the Mediator complex subunit 17 family. Component of the Mediator complex.

It localises to the nucleus. Component of the Mediator complex, a coactivator involved in the regulated transcription of nearly all RNA polymerase II-dependent genes. Mediator functions as a bridge to convey information from gene-specific regulatory proteins to the basal RNA polymerase II transcription machinery. Mediator is recruited to promoters by direct interactions with regulatory proteins and serves as a scaffold for the assembly of a functional preinitiation complex with RNA polymerase II and the general transcription factors. The chain is Mediator of RNA polymerase II transcription subunit 17 (srb4) from Aspergillus fumigatus (strain ATCC MYA-4609 / CBS 101355 / FGSC A1100 / Af293) (Neosartorya fumigata).